Reading from the N-terminus, the 179-residue chain is Probable chorismate pyruvate-lyase (179 aa).

Substrate-binding residues include Arg-82, Leu-120, and Glu-165.

It belongs to the UbiC family.

The protein localises to the cytoplasm. It carries out the reaction chorismate = 4-hydroxybenzoate + pyruvate. The protein operates within cofactor biosynthesis; ubiquinone biosynthesis. Its function is as follows. Removes the pyruvyl group from chorismate, with concomitant aromatization of the ring, to provide 4-hydroxybenzoate (4HB) for the ubiquinone pathway. In Vibrio parahaemolyticus serotype O3:K6 (strain RIMD 2210633), this protein is Probable chorismate pyruvate-lyase.